A 312-amino-acid chain; its full sequence is tRNA U34 carboxymethyltransferase (312 aa).

Residues Lys88, Trp102, Lys107, Gly127, 149–151 (DPS), 177–178 (LD), Met191, Tyr195, and Arg304 contribute to the carboxy-S-adenosyl-L-methionine site.

The protein belongs to the class I-like SAM-binding methyltransferase superfamily. CmoB family. In terms of assembly, homotetramer.

It catalyses the reaction carboxy-S-adenosyl-L-methionine + 5-hydroxyuridine(34) in tRNA = 5-carboxymethoxyuridine(34) in tRNA + S-adenosyl-L-homocysteine + H(+). Its function is as follows. Catalyzes carboxymethyl transfer from carboxy-S-adenosyl-L-methionine (Cx-SAM) to 5-hydroxyuridine (ho5U) to form 5-carboxymethoxyuridine (cmo5U) at position 34 in tRNAs. The polypeptide is tRNA U34 carboxymethyltransferase (Dichelobacter nodosus (strain VCS1703A)).